Consider the following 133-residue polypeptide: Small ribosomal subunit protein uS9 (133 aa).

Residues 102 to 133 (KPKGLLTRDPREVERKKYGLKKARRAPQFSKR) are disordered. A compositionally biased stretch (basic and acidic residues) spans 107-118 (LTRDPREVERKK). A compositionally biased stretch (basic residues) spans 119-133 (YGLKKARRAPQFSKR).

Belongs to the universal ribosomal protein uS9 family.

This Deinococcus deserti (strain DSM 17065 / CIP 109153 / LMG 22923 / VCD115) protein is Small ribosomal subunit protein uS9.